Here is a 171-residue protein sequence, read N- to C-terminus: Transcription antitermination protein NusB (171 aa).

Belongs to the NusB family.

Functionally, involved in transcription antitermination. Required for transcription of ribosomal RNA (rRNA) genes. Binds specifically to the boxA antiterminator sequence of the ribosomal RNA (rrn) operons. This Brucella abortus (strain S19) protein is Transcription antitermination protein NusB.